A 719-amino-acid polypeptide reads, in one-letter code: Potassium-transporting ATPase ATP-binding subunit (719 aa).

4 helical membrane passes run 35-55, 62-82, 228-248, and 254-274; these read LFVV…PGLF, VYYA…NYAE, ILLS…FFFG, and FVGG…VALM. The 4-aspartylphosphate intermediate role is filled by Asp318. Asp355 and Glu359 together coordinate ATP. The segment at 372-396 is disordered; it reads GKVQTDGGQSASEELDEPGDSVDAP. Residues 373-383 show a composition bias toward polar residues; it reads KVQTDGGQSAS. ATP is bound by residues 416–423 and Lys435; that span reads FSAETRMS. Mg(2+) is bound by residues Asp554 and Asp558. A run of 3 helical transmembrane segments spans residues 624–644, 652–672, and 698–718; these read FVLL…MDIL, AVTA…PLAL, and LIAP…LGVF.

It belongs to the cation transport ATPase (P-type) (TC 3.A.3) family. Type IA subfamily. In terms of assembly, the system is composed of three essential subunits: KdpA, KdpB and KdpC. The complex also contains KdpF, a small non-essential subunit.

It localises to the cell membrane. It catalyses the reaction K(+)(out) + ATP + H2O = K(+)(in) + ADP + phosphate + H(+). Its function is as follows. Part of the high-affinity ATP-driven potassium transport (or Kdp) system, which catalyzes the hydrolysis of ATP coupled with the electrogenic transport of potassium into the cytoplasm. This subunit is responsible for energy coupling to the transport system and for the release of the potassium ions to the cytoplasm. The Kdp system is essential for growth under K(+) limitation, and for survival under desiccation and salt crystal inclusion. The polypeptide is Potassium-transporting ATPase ATP-binding subunit (Halobacterium salinarum (strain ATCC 29341 / DSM 671 / R1)).